The sequence spans 130 residues: Small ribosomal subunit protein uS9 (130 aa).

This sequence belongs to the universal ribosomal protein uS9 family.

This is Small ribosomal subunit protein uS9 from Carboxydothermus hydrogenoformans (strain ATCC BAA-161 / DSM 6008 / Z-2901).